Reading from the N-terminus, the 592-residue chain is MAPSQLALFSVSDKTGLVEFARSLASLGLSLVASGGTAKAIRDAGLAVRDVSELTGFPEMLGGRVKTLHPAVHAGILARNIPEDAADMARLDFNLVRVVVCNLYPFVKTVASPDVTVEAAVEQIDIGGVTLLRAAAKNHARVTVVCEPEDYAGVAAEMHGSDSKDTSLETRRHLALKAFTHTAQYDEAISDYFRKQYSKGISQMPLRYGMNPHQTPAQLYTLKPKLPITVLNGAPGFINLCDALNAWQLVTELRGAVDIPAAASFKHVSPAGAAVGVPLSEDEARVCMVYDLYPTLTPLAVAYARARGADRMSSFGDFVALSDICDVPTAKIISREVSDGIVAPGYEEEALKILSKKKNGNYCVLQMDQSYKPDENEVRTLFGLRLSQKRNNGVVDKSLFSNIVTKNKDLPESALRDLIVATVAVKYTQSNSVCYAKDGQVIGIGAGQQSRIHCTRLAGDKANSWWLRHHPRVLSMKFKAGVKRAEISNAIDQYVTGTIGEGEDLVKWEALFEEVPELLTEAEKKEWVDKLSGVSVSSDAFFPFRDNVDRAKRSGVAYIVAPSGSTADKVVIEACDELGIVLAHTDLRLFHH.

N-acetylmethionine is present on M1. Positions 1-146 (MAPSQLALFS…KNHARVTVVC (146 aa)) constitute an MGS-like domain. The interval 1–198 (MAPSQLALFS…ISDYFRKQYS (198 aa)) is IMP cyclohydrolase. IMP contacts are provided by residues 12–14 (SDK), 34–37 (SGGT), 64–67 (RVKT), 101–102 (CN), and 125–126 (DI). Catalysis depends on K137, which acts as the Proton donor/acceptor; for FAICAR cyclization activity. At K199 the chain carries N6-acetyllysine. The segment at 199-592 (KGISQMPLRY…AHTDLRLFHH (394 aa)) is AICAR formyltransferase. Residues 207 to 208 (RY), H267, G316, D339, N431, and R451 each bind 5-amino-1-(5-phospho-beta-D-ribosyl)imidazole-4-carboxamide. The active-site Proton acceptor; for AICAR formyltransferase activity is H267. I452 contacts (6R)-10-formyltetrahydrofolate. Residue F541 participates in 5-amino-1-(5-phospho-beta-D-ribosyl)imidazole-4-carboxamide binding. Residues D546 and 565-566 (ST) contribute to the (6R)-10-formyltetrahydrofolate site. Residue R588 participates in 5-amino-1-(5-phospho-beta-D-ribosyl)imidazole-4-carboxamide binding.

This sequence belongs to the PurH family. In terms of assembly, homodimer. Associates with internalized INSR complexes on Golgi/endosomal membranes. Interacts with INSR; ATIC together with PRKAA2/AMPK2 and HACD3/PTPLAD1 is proposed to be part of a signaling network regulating INSR autophosphorylation and endocytosis.

The protein resides in the cytoplasm. Its subcellular location is the cytosol. It catalyses the reaction (6R)-10-formyltetrahydrofolate + 5-amino-1-(5-phospho-beta-D-ribosyl)imidazole-4-carboxamide = 5-formamido-1-(5-phospho-D-ribosyl)imidazole-4-carboxamide + (6S)-5,6,7,8-tetrahydrofolate. The enzyme catalyses 10-formyldihydrofolate + 5-amino-1-(5-phospho-beta-D-ribosyl)imidazole-4-carboxamide = 5-formamido-1-(5-phospho-D-ribosyl)imidazole-4-carboxamide + 7,8-dihydrofolate. It carries out the reaction IMP + H2O = 5-formamido-1-(5-phospho-D-ribosyl)imidazole-4-carboxamide. It participates in purine metabolism; IMP biosynthesis via de novo pathway; 5-formamido-1-(5-phospho-D-ribosyl)imidazole-4-carboxamide from 5-amino-1-(5-phospho-D-ribosyl)imidazole-4-carboxamide (10-formyl THF route): step 1/1. Its pathway is purine metabolism; IMP biosynthesis via de novo pathway; IMP from 5-formamido-1-(5-phospho-D-ribosyl)imidazole-4-carboxamide: step 1/1. AMP and XMP inhibit AICAR formyltransferase activity. AICAR formyltransferase activity is inhibited by N-(6-fluoro-1-oxo-1,2-dihydroisoquinolin-7-yl)-5- [(3R)-3-hydroxypyrrolidin-1-yl]thiophene-2-sulfonamide (LSN 3213128), which acts as a tumor suppression in cancer cell lines. Bifunctional enzyme that catalyzes the last two steps of purine biosynthesis. Acts as a transformylase that incorporates a formyl group to the AMP analog AICAR (5-amino-1-(5-phospho-beta-D-ribosyl)imidazole-4-carboxamide) to produce the intermediate formyl-AICAR (FAICAR). Also displays cyclohydrolase activity involving the cyclization of FAICAR to inosine monophosphate (IMP). Can use both 10-formyldihydrofolate and 10-formyltetrahydrofolate as the formyl donor in this reaction. Also catalyzes the cyclization of FAICAR to IMP. Promotes insulin receptor/INSR autophosphorylation and is involved in INSR internalization. The protein is Bifunctional purine biosynthesis protein ATIC (Atic) of Mus musculus (Mouse).